A 483-amino-acid chain; its full sequence is Cobyric acid synthase (483 aa).

The GATase cobBQ-type domain maps to 251–438; the sequence is ALIVAVPMLP…LHGIFSADRF (188 aa). The active-site Nucleophile is Cys333. The active site involves His430.

Belongs to the CobB/CobQ family. CobQ subfamily.

The protein operates within cofactor biosynthesis; adenosylcobalamin biosynthesis. In terms of biological role, catalyzes amidations at positions B, D, E, and G on adenosylcobyrinic A,C-diamide. NH(2) groups are provided by glutamine, and one molecule of ATP is hydrogenolyzed for each amidation. This is Cobyric acid synthase from Brucella abortus (strain S19).